The following is a 1161-amino-acid chain: ATP-dependent helicase/deoxyribonuclease subunit B (1161 aa).

The protein belongs to the helicase family. AddB/RexB type 2 subfamily. In terms of assembly, heterodimer of AddA and RexB. Mg(2+) serves as cofactor.

In terms of biological role, the heterodimer acts as both an ATP-dependent DNA helicase and an ATP-dependent, dual-direction single-stranded exonuclease. Recognizes the chi site generating a DNA molecule suitable for the initiation of homologous recombination. This subunit has 5' -&gt; 3' nuclease activity but not helicase activity. The sequence is that of ATP-dependent helicase/deoxyribonuclease subunit B from Oenococcus oeni (strain ATCC BAA-331 / PSU-1).